The sequence spans 70 residues: Putative RNA-binding protein YbcJ (70 aa).

Positions 12 to 68 constitute an S4 RNA-binding domain; that stretch reads VELCDLLKLEGWSESGAQAKIAIAEGQVKVDGAVETRKRCKIVAGQTVSFAGHSVQV.

As to quaternary structure, in pull-down experiments interacts with CedA.

Its structure and the presence of conserved basic residues indicates that it probably binds RNA. The chain is Putative RNA-binding protein YbcJ (ybcJ) from Escherichia coli (strain K12).